We begin with the raw amino-acid sequence, 435 residues long: MGTQKKGPRSEKVSPYDTTTPEVEALDHQMDTLNWRIWIIQVMMFTLGAVMLLATLIAASSEYTGIPCFYAAVVDYELFNATLDGGVWSGNRGGYSAPVLFLEPHSVVAFTYYTALTAMAMAVYTLITAAIIHRETKNQRVRQSSGVAWLVVDPTTLFWGLLSLWLLNAVVLLLAYKQIGVAATLYLGHFATSVIFTTYFCGRGKLDETNIKAVANLRQQSVFLYRLAGPTRAVFVNLMAALMAICILFVSLMLELVVANHLHTGLWSSVSVAMSTFSTLSVVYLIVSELILAHYIHVLIGPSLGTLVACATLGTAAHSYMDRLYDPISVQSPRLIPTTRGTLACLAVFSVVMLLLRLMRAYVYHRQKRSRFYGAVRRVPERVRGYIRKVKPAHRNSRRTNYPSQGYGYVYENDSTYETDREDELLYERSNSGWE.

Over 1–36 the chain is Intravirion; it reads MGTQKKGPRSEKVSPYDTTTPEVEALDHQMDTLNWR. A helical transmembrane segment spans residues 37 to 57; it reads IWIIQVMMFTLGAVMLLATLI. Residues 58–111 lie on the Virion surface side of the membrane; it reads AASSEYTGIPCFYAAVVDYELFNATLDGGVWSGNRGGYSAPVLFLEPHSVVAFT. A helical transmembrane segment spans residues 112-132; it reads YYTALTAMAMAVYTLITAAII. Topologically, residues 133–155 are intravirion; it reads HRETKNQRVRQSSGVAWLVVDPT. The helical transmembrane segment at 156–176 threads the bilayer; sequence TLFWGLLSLWLLNAVVLLLAY. Residues 177–178 are Virion surface-facing; the sequence is KQ. The chain crosses the membrane as a helical span at residues 179-199; the sequence is IGVAATLYLGHFATSVIFTTY. At 200–233 the chain is on the intravirion side; the sequence is FCGRGKLDETNIKAVANLRQQSVFLYRLAGPTRA. A helical transmembrane segment spans residues 234 to 254; the sequence is VFVNLMAALMAICILFVSLML. The Virion surface segment spans residues 255-265; the sequence is ELVVANHLHTG. Residues 266-288 traverse the membrane as a helical segment; that stretch reads LWSSVSVAMSTFSTLSVVYLIVS. Topologically, residues 289–294 are intravirion; it reads ELILAH. Residues 295 to 317 traverse the membrane as a helical segment; sequence YIHVLIGPSLGTLVACATLGTAA. Topologically, residues 318–334 are virion surface; the sequence is HSYMDRLYDPISVQSPR. The chain crosses the membrane as a helical span at residues 335-355; that stretch reads LIPTTRGTLACLAVFSVVMLL. At 356–435 the chain is on the intravirion side; it reads LRLMRAYVYH…LYERSNSGWE (80 aa).

The protein belongs to the herpesviridae glycoprotein M family. As to quaternary structure, interacts (via N-terminus) with gN (via N-terminus). The gM-gN heterodimer forms the gCII complex.

The protein localises to the virion membrane. The protein resides in the host Golgi apparatus. It is found in the host trans-Golgi network. Its subcellular location is the host endosome membrane. It localises to the host nucleus inner membrane. Envelope glycoprotein important for virion assembly and egress. Plays a role in the correct incorporation of gH-gL into virion membrane. Directs the glycoprotein N (gN) to the host trans-Golgi network. The sequence is that of Envelope glycoprotein M from Homo sapiens (Human).